The primary structure comprises 144 residues: C-C motif chemokine 25 (144 aa).

Residues 1-23 form the signal peptide; that stretch reads MKLWLFACLVACFVGAWMPVVHA. 2 cysteine pairs are disulfide-bonded: C30–C58 and C31–C73. The segment at 98–144 is disordered; the sequence is KSASDSQTERKKSNHMKSKVENPNSTSVRSATLGHPRMVMMPRKTNN. Residues 118–127 are compositionally biased toward polar residues; the sequence is ENPNSTSVRS.

Belongs to the intercrine beta (chemokine CC) family. In terms of tissue distribution, specifically expressed by thymic dendritic cells. High levels in thymus and small intestine.

It localises to the secreted. Potentially involved in T-cell development. Recombinant protein shows chemotactic activity on thymocytes, macrophages, THP-1 cells, and dendritics cells but is inactive on peripheral blood lymphocytes and neutrophils. Binds to CCR9. Binds to atypical chemokine receptor ACKR4 and mediates the recruitment of beta-arrestin (ARRB1/2) to ACKR4. This is C-C motif chemokine 25 (Ccl25) from Mus musculus (Mouse).